The primary structure comprises 131 residues: Sec-independent protein translocase protein TatB (131 aa).

A helical membrane pass occupies residues 2–22; that stretch reads FDGIGFMELLLIGIVGLVVLG. Over residues 86–95 the composition is skewed to polar residues; the sequence is LKEAAQSVNR. Positions 86–131 are disordered; sequence LKEAAQSVNRPYQVEDVPAAKDVPAKEMPTSETSTATNANSDKPNG. Over residues 115–131 the composition is skewed to low complexity; sequence TSETSTATNANSDKPNG.

This sequence belongs to the TatB family. The Tat system comprises two distinct complexes: a TatABC complex, containing multiple copies of TatA, TatB and TatC subunits, and a separate TatA complex, containing only TatA subunits. Substrates initially bind to the TatABC complex, which probably triggers association of the separate TatA complex to form the active translocon.

It is found in the cell inner membrane. In terms of biological role, part of the twin-arginine translocation (Tat) system that transports large folded proteins containing a characteristic twin-arginine motif in their signal peptide across membranes. Together with TatC, TatB is part of a receptor directly interacting with Tat signal peptides. TatB may form an oligomeric binding site that transiently accommodates folded Tat precursor proteins before their translocation. The protein is Sec-independent protein translocase protein TatB of Shewanella halifaxensis (strain HAW-EB4).